The primary structure comprises 404 residues: Voltage-gated potassium channel subunit beta-3 (404 aa).

A compositionally biased stretch (polar residues) spans 1 to 14 (MQVSIACTEQNLRS). Residues 1–78 (MQVSIACTEQ…RESTGRGTGM (78 aa)) form a disordered region. A compositionally biased stretch (gly residues) spans 28-50 (PGGGNGGPVGGGHGNPPGGGGLG). Residues threonine 97, tryptophan 98, glutamine 104, and aspartate 126 each coordinate NADP(+). Tyrosine 131 serves as the catalytic Proton donor/acceptor. Residues asparagine 199, serine 229, arginine 230, glutamine 255, tryptophan 284, serine 285, proline 286, leucine 287, alanine 288, cysteine 289, lysine 295, lysine 305, glycine 364, serine 366, glutamine 370, and glutamate 373 each contribute to the NADP(+) site.

Belongs to the shaker potassium channel beta subunit family. In terms of assembly, forms heteromultimeric complex with alpha subunits. Interacts with KCNA5 and KCNB2. As to expression, predominantly expressed in brain. Strongest expression in olfactory bulb and thalamic nuclei. Not detected in heart, spleen, lung, liver, skeletal muscle, kidney and testis.

The protein resides in the cytoplasm. Its function is as follows. Regulatory subunit of the voltage-gated potassium (Kv) channels composed of pore-forming and potassium-conducting alpha subunits and of regulatory beta subunits. The beta-3/KCNAB3 subunit may mediate closure of potassium channels. Inactivates Kv1.4/KCNA4 alpha subunit-containing Kv channel current but not Kv1.1/KCNA1 or Kv1.5/KCNA5 channels. May display nicotinamide adenine dinucleotide phosphate (NADPH)-dependent aldoketoreductase activity. The binding of oxidized and reduced NADP(H) cofactors may be required for the regulation of potassium channel activity. This is Voltage-gated potassium channel subunit beta-3 from Rattus norvegicus (Rat).